Consider the following 363-residue polypeptide: Lovastatin nonaketide synthase, enoyl reductase component lovC (363 aa).

Residues 51 to 54 (SDTK), 174 to 177 (STAT), 197 to 200 (SPHN), Y215, 262 to 263 (LN), T280, and 351 to 352 (LS) contribute to the NADP(+) site. Positions 226 to 272 (TYTKNNLRYALDCITNVESTTFCFAAIGRAGGHYVSLNPFPEHAATR) are lovB-binding.

This sequence belongs to the zinc-containing alcohol dehydrogenase family. In terms of assembly, each MAT domain from the lovB homodimer binds one lovC molecule to form the final active lovB-lovC megasynthase complex.

It carries out the reaction holo-[lovastatin nonaketide synthase] + 9 malonyl-CoA + S-adenosyl-L-methionine + 11 NADPH + 19 H(+) = dihydromonacolin L-[lovastatin nonaketide synthase] + S-adenosyl-L-homocysteine + 9 CO2 + 11 NADP(+) + 9 CoA + 6 H2O. It functions in the pathway polyketide biosynthesis; lovastatin biosynthesis. Its function is as follows. Trans-enoyl reductase; part of the gene cluster that mediates the biosynthesis of lovastatin (also known as mevinolin, mevacor or monacolin K), a hypolipidemic inhibitor of (3S)-hydroxymethylglutaryl-coenzyme A (HMG-CoA) reductase (HMGR). The first step in the biosynthesis of lovastatin is the production of dihydromonacolin L acid (DML) by the lovastatin nonaketide synthase lovB and the trans-acting enoyl reductase lovC (called the lovB-lovC megasynthase complex) via condensation of one acetyl-CoA unit and 8 malonyl-CoA units. The formation of the LovB/C complex is essential for the integrity of the catalytic chamber to the complete total synthesis of DML acid. Dihydromonacolin L acid is released from lovB by the thioesterase lovG. Next, dihydromonacolin L acid is oxidized by the dihydromonacolin L monooxygenase lovA twice to form monacolin J acid. The 2-methylbutyrate moiety of lovastatin is synthesized by the lovastatin diketide synthase lovF via condensation of one acetyl-CoA unit and one malonyl-CoA unit. Finally, the covalent attachment of this moiety to monacolin J acid is catalyzed by the transesterase lovD to yield lovastatin. LovD has broad substrate specificity and can also convert monacolin J to simvastatin using alpha-dimethylbutanoyl-S-methyl-3-mercaptopropionate (DMB-S-MMP) as the thioester acyl donor, and can also catalyze the reverse reaction and function as hydrolase in vitro. LovD has much higher activity with LovF-bound 2-methylbutanoate than with free diketide substrates. This Aspergillus terreus protein is Lovastatin nonaketide synthase, enoyl reductase component lovC.